Here is a 177-residue protein sequence, read N- to C-terminus: Probable DNA-directed RNA polymerase subunit delta (177 aa).

Residues 14–81 (CSMIEVVHSV…GENRWGLRSW (68 aa)) enclose the HTH HARE-type domain. Residues 93-177 (PQPKPKKKRK…ETEEEEEEEL (85 aa)) are disordered. The span at 106–177 (DGFDDYIEED…ETEEEEEEEL (72 aa)) shows a compositional bias: acidic residues.

This sequence belongs to the RpoE family. In terms of assembly, RNAP is composed of a core of 2 alpha, a beta and a beta' subunits. The core is associated with a delta subunit and one of several sigma factors.

Its function is as follows. Participates in both the initiation and recycling phases of transcription. In the presence of the delta subunit, RNAP displays an increased specificity of transcription, a decreased affinity for nucleic acids, and an increased efficiency of RNA synthesis because of enhanced recycling. The chain is Probable DNA-directed RNA polymerase subunit delta from Bacillus cereus (strain AH187).